The following is a 179-amino-acid chain: Large ribosomal subunit protein uL6 (179 aa).

Belongs to the universal ribosomal protein uL6 family. In terms of assembly, part of the 50S ribosomal subunit.

Its function is as follows. This protein binds to the 23S rRNA, and is important in its secondary structure. It is located near the subunit interface in the base of the L7/L12 stalk, and near the tRNA binding site of the peptidyltransferase center. The protein is Large ribosomal subunit protein uL6 of Chlorobium phaeobacteroides (strain DSM 266 / SMG 266 / 2430).